Consider the following 733-residue polypeptide: mRNA 3'-end-processing protein rna14 (733 aa).

Positions 1–45 (MNSDDNVEADASSNIIKDSPKIKEQENTSTVNESDVLATSTTASS) are disordered. Residues 27–45 (NTSTVNESDVLATSTTASS) are compositionally biased toward polar residues. HAT repeat units follow at residues 85–117 (GKHE…SELA), 119–150 (NDFH…YIRR), 158–193 (QSRS…FLRS), 204–237 (QKLD…FENS), 269–302 (EGLR…WEQS), and 312–344 (MLQN…YFLS). Over residues 404 to 414 (DSKASSSSESS) the composition is skewed to low complexity. Residues 404–425 (DSKASSSSESSTDGNPQEKKLP) form a disordered region. An HAT 7 repeat occupies 523-557 (NDETNARALFEKAIPRIAADEAKPIYQKWLDYESN).

It is found in the nucleus. The protein resides in the cytoplasm. Its function is as follows. Component of the cleavage factor IA (CFIA) complex, which is involved in the endonucleolytic cleavage during polyadenylation-dependent pre-mRNA 3'-end formation. In Schizosaccharomyces pombe (strain 972 / ATCC 24843) (Fission yeast), this protein is mRNA 3'-end-processing protein rna14 (rna14).